A 184-amino-acid polypeptide reads, in one-letter code: ATP synthase subunit b, chloroplastic (184 aa).

The helical transmembrane segment at 27–49 (LATNPINLSVVLGVLIFFGKGVL) threads the bilayer.

The protein belongs to the ATPase B chain family. In terms of assembly, F-type ATPases have 2 components, F(1) - the catalytic core - and F(0) - the membrane proton channel. F(1) has five subunits: alpha(3), beta(3), gamma(1), delta(1), epsilon(1). F(0) has four main subunits: a(1), b(1), b'(1) and c(10-14). The alpha and beta chains form an alternating ring which encloses part of the gamma chain. F(1) is attached to F(0) by a central stalk formed by the gamma and epsilon chains, while a peripheral stalk is formed by the delta, b and b' chains.

It is found in the plastid. The protein localises to the chloroplast thylakoid membrane. F(1)F(0) ATP synthase produces ATP from ADP in the presence of a proton or sodium gradient. F-type ATPases consist of two structural domains, F(1) containing the extramembraneous catalytic core and F(0) containing the membrane proton channel, linked together by a central stalk and a peripheral stalk. During catalysis, ATP synthesis in the catalytic domain of F(1) is coupled via a rotary mechanism of the central stalk subunits to proton translocation. Functionally, component of the F(0) channel, it forms part of the peripheral stalk, linking F(1) to F(0). This is ATP synthase subunit b, chloroplastic from Platanus occidentalis (Sycamore).